The chain runs to 421 residues: Meiotic fizzy-related protein 1 (421 aa).

Positions 79-107 (DTPDRKSYSLSPISPQSQDMLRQPQKPKR) are disordered. Positions 86-98 (YSLSPISPQSQDM) are enriched in polar residues. WD repeat units lie at residues 123-160 (KNDF…VVQL), 164-203 (GATN…SVRS), 206-246 (GHSE…EMMK), 247-286 (VHEQ…PLHK), 289-331 (EHTA…LQNK), 333-374 (DTGS…NIAN), and 377-416 (AHTN…PKEE).

This sequence belongs to the WD repeat CDC20/Fizzy family. As to quaternary structure, interacts with mes1.

It localises to the nucleus. Meiosis-specific activator of the anaphase promoting complex/cyclosome (APC/C). Involved in cdc13 degradation. The protein is Meiotic fizzy-related protein 1 (mfr1) of Schizosaccharomyces pombe (strain 972 / ATCC 24843) (Fission yeast).